The following is a 179-amino-acid chain: MSDVVLELPSDLRHELKEPLGRIYTDTAALLADAGDPIIAVGDMVTYHLIEAGRTPDLALVDERTERSAVDADVAAAIDGFDRTLSVDNPAATLTADLLAALRDGLDSDETTLLDVDGEEDLATLPAVLAAPAGASVVYGQPDEGMVLADCDDTARDRVRSLLERMDGDAERAIALVSN.

5 residues coordinate GTP: D43, V45, D62, E120, and D143.

Belongs to the GTP-dependent DPCK family.

It catalyses the reaction 3'-dephospho-CoA + GTP = GDP + CoA + H(+). Its pathway is cofactor biosynthesis; coenzyme A biosynthesis. Its function is as follows. Catalyzes the GTP-dependent phosphorylation of the 3'-hydroxyl group of dephosphocoenzyme A to form coenzyme A (CoA). This is GTP-dependent dephospho-CoA kinase from Haloarcula marismortui (strain ATCC 43049 / DSM 3752 / JCM 8966 / VKM B-1809) (Halobacterium marismortui).